The sequence spans 545 residues: MAELTIRPEEIRDALDNFVQNYEPETAVREEVGTVVTSGDGIAHVEGLPSAMANELLRFENGTMGIALNLEERQIGVVVLGDSDGIDEGSTVRGTGEVLSVPVGEGYLGRVVDAMGNPVDGLGEIKGVEGRRALEIQAAGVMDRQEVREPLQTGLKAIDSMIPIGRGQRQLIIGDRKTGKTAIAIDTIINQKGNWESGDPQKQVRCIYVAIGQKGSTVAEVKGALEKAGAMEYTTIVHAPASDPAGFKYIAPYAGSAIGQHWMYQGKHVLIIFDDLTKQAEAYRAMSLLLRRPPGREAYPGDVFYLHSRLLERCAKLSDDLGGGSMTGLPIIETKANDVSAFIPTNVISITDGQIFLQSDLFNANQRPAVDVGISVSRVGGAAQIKAMKSVAGTLKISLAQYRDMQAFAMFASDLDDTSRRQLDRGARLMELLKQGQFSPYPVEEQVISVWGGTTGKFDDVPVGDVLRFEGDVLEYLRSHSNVLTTIRETGKFDDEAKDAAAAAFEEVKKGFKTSDGKMLAGHEEFSPMADEDIDQAKIVRAKKG.

174–181 contributes to the ATP binding site; the sequence is GDRKTGKT.

This sequence belongs to the ATPase alpha/beta chains family. In terms of assembly, F-type ATPases have 2 components, CF(1) - the catalytic core - and CF(0) - the membrane proton channel. CF(1) has five subunits: alpha(3), beta(3), gamma(1), delta(1), epsilon(1). CF(0) has three main subunits: a(1), b(2) and c(9-12). The alpha and beta chains form an alternating ring which encloses part of the gamma chain. CF(1) is attached to CF(0) by a central stalk formed by the gamma and epsilon chains, while a peripheral stalk is formed by the delta and b chains.

It is found in the cell membrane. The enzyme catalyses ATP + H2O + 4 H(+)(in) = ADP + phosphate + 5 H(+)(out). Functionally, produces ATP from ADP in the presence of a proton gradient across the membrane. The alpha chain is a regulatory subunit. This chain is ATP synthase subunit alpha, found in Cutibacterium acnes (strain DSM 16379 / KPA171202) (Propionibacterium acnes).